A 1441-amino-acid polypeptide reads, in one-letter code: Pleiotropic drug resistance protein TUR2 (1441 aa).

Positions 158-430 constitute an ABC transporter 1 domain; that stretch reads LSALHLMPSG…FESMGFKCPE (273 aa). 191–198 lines the ATP pocket; it reads GPPGAGKT. The region spanning 508–721 is the ABC transmembrane type-2 1 domain; it reads ELLKACIDRE…AQNAIAVNEF (214 aa). The next 6 helical transmembrane spans lie at 526–546, 559–579, 614–634, 646–666, 671–691, and 756–776; these read FVYIFKVVQLIVLALIAMTVF, ATIFFGAMFLGLVTHLFNGFA, IPISFVECGVWIAMTYYVIGF, LLLVLISQVASGLFRLLAAVG, VADTFGAFAQLVLLVLGGFII, and IGVGALIGYMVLFNFLFILFL. In terms of domain architecture, ABC transporter 2 spans 843–1095; it reads ITFDNVKYSV…HLIKYFESID (253 aa). 888-895 provides a ligand contact to ATP; the sequence is GVSGRGKT. One can recognise an ABC transmembrane type-2 2 domain in the interval 1168–1382; it reads MQCLACLWKQ…TLYGLVVSQF (215 aa). The next 7 helical transmembrane spans lie at 1187–1207, 1215–1235, 1275–1295, 1302–1322, 1332–1352, 1363–1383, and 1413–1433; these read YTATRLFFTVVIALIFGTIFW, TSLDLINAMGSMYAAVLFIGI, VPHILVQTLLYGLLVYSMIGF, FLWYMFFMFFTFLYFTYYGMM, IAAIVAAAFYAIWNIFAGFII, WYYWACPVAWTLYGLVVSQFG, and VVGVMVVVFTVLFASIFAFSI.

Belongs to the ABC transporter superfamily. ABCG family. PDR (TC 3.A.1.205) subfamily. In terms of tissue distribution, ubiquitous.

It localises to the cell membrane. In terms of biological role, may be a general defense protein. Seems involved in turion (dormant buds) formation. Confers resistance to the diterpenoid antifungal agent sclareol. This chain is Pleiotropic drug resistance protein TUR2 (TUR2), found in Spirodela polyrhiza (Giant duckweed).